The chain runs to 233 residues: N-(5'-phosphoribosyl)anthranilate isomerase (233 aa).

Belongs to the TrpF family.

It carries out the reaction N-(5-phospho-beta-D-ribosyl)anthranilate = 1-(2-carboxyphenylamino)-1-deoxy-D-ribulose 5-phosphate. It participates in amino-acid biosynthesis; L-tryptophan biosynthesis; L-tryptophan from chorismate: step 3/5. In Ralstonia pickettii (strain 12J), this protein is N-(5'-phosphoribosyl)anthranilate isomerase.